Here is a 107-residue protein sequence, read N- to C-terminus: Large ribosomal subunit protein uL24 (107 aa).

This sequence belongs to the universal ribosomal protein uL24 family. Part of the 50S ribosomal subunit.

Its function is as follows. One of two assembly initiator proteins, it binds directly to the 5'-end of the 23S rRNA, where it nucleates assembly of the 50S subunit. In terms of biological role, one of the proteins that surrounds the polypeptide exit tunnel on the outside of the subunit. In Streptomyces avermitilis (strain ATCC 31267 / DSM 46492 / JCM 5070 / NBRC 14893 / NCIMB 12804 / NRRL 8165 / MA-4680), this protein is Large ribosomal subunit protein uL24.